A 349-amino-acid chain; its full sequence is MSSLSGKVQTVLGPVEPSQLGRTLTHEHLTMAFDSFYCPPPPCQEAASREPIMMKNLFWIQKNPYSHQENLQLNQEVEAVREELLYFKAKGGGAVVENTTTGLSRDVRTLKWLAEQTGVHIIAGAGFYVDATHSAATRAMSVEQLTDVLISEILHGADGTSIKCGVIGEIGCSWPLTDSERKVLQATAHAQAQLGCPVIIHPGRNPGAPFQIIRVLQEAGADISKTVMSHLDRSIFDKKELLEFAQLGCYLEYDLFGTELLNYQLSPDIDMPDDNKRIRRVRFLVNEGYEDRILMAHDIHTKHRLMKYGGHGYSHILTNVVPKMLLRGLTERVLDKILRENPKQWLTFK.

Histidine 26, histidine 28, glutamate 169, histidine 201, histidine 230, and aspartate 298 together coordinate a divalent metal cation.

It belongs to the metallo-dependent hydrolases superfamily. Phosphotriesterase family. The cofactor is a divalent metal cation. Expressed primarily in proximal tubules of the kidney.

It localises to the cytoplasm. The protein localises to the cytosol. The enzyme catalyses N-acetyltaurine + H2O = taurine + acetate. It carries out the reaction N-propanoyltaurine + H2O = propanoate + taurine. It catalyses the reaction N-acetyl-L-methionine + H2O = L-methionine + acetate. The catalysed reaction is N-acetyl-L-isoleucine + H2O = L-isoleucine + acetate. The enzyme catalyses N-acetyl-L-leucine + H2O = L-leucine + acetate. It carries out the reaction N-acetyl-L-valine + H2O = L-valine + acetate. In terms of biological role, N-acetyltaurine hydrolase that regulates feeding by catalyzing the hydrolysis of N-acetyltaurine into taurine and acetate. N-acetyltaurine has anorexigenic and anti-obesity effects that are dependent on GFRAL receptor and GDF15. PTER also acts on other N-acetyl amino acids (Met, Ile, Leu, Val) and N-propionyltaurine, but at lower rates. Binds resiniferotoxin, a vanilloid that desensitizes nociceptive neurons. The sequence is that of N-acetyltaurine hydrolase from Rattus norvegicus (Rat).